Consider the following 479-residue polypeptide: Outer membrane protein OprJ (479 aa).

Positions 1-19 are cleaved as a signal peptide; sequence MRKPAFGVSALLIALTLGA. Residue Cys20 is the site of N-palmitoyl cysteine attachment. A lipid anchor (S-diacylglycerol cysteine) is attached at Cys20. Positions 102–121 are disordered; sequence LNAAATGNRQRQPADLSAGN.

The protein belongs to the outer membrane factor (OMF) (TC 1.B.17) family.

The protein localises to the cell outer membrane. In terms of biological role, channel-forming component of a multidrug resistance efflux pump. This chain is Outer membrane protein OprJ (oprJ), found in Pseudomonas aeruginosa (strain ATCC 15692 / DSM 22644 / CIP 104116 / JCM 14847 / LMG 12228 / 1C / PRS 101 / PAO1).